Reading from the N-terminus, the 217-residue chain is 3,4-dihydroxy-2-butanone 4-phosphate synthase (217 aa).

D-ribulose 5-phosphate is bound by residues 37–38 (RE), aspartate 42, 150–154 (RGGHT), and glutamate 174. Glutamate 38 is a Mg(2+) binding site. Histidine 153 contributes to the Mg(2+) binding site.

The protein belongs to the DHBP synthase family. As to quaternary structure, homodimer. Mg(2+) serves as cofactor. Requires Mn(2+) as cofactor.

It carries out the reaction D-ribulose 5-phosphate = (2S)-2-hydroxy-3-oxobutyl phosphate + formate + H(+). It functions in the pathway cofactor biosynthesis; riboflavin biosynthesis; 2-hydroxy-3-oxobutyl phosphate from D-ribulose 5-phosphate: step 1/1. Catalyzes the conversion of D-ribulose 5-phosphate to formate and 3,4-dihydroxy-2-butanone 4-phosphate. The protein is 3,4-dihydroxy-2-butanone 4-phosphate synthase of Escherichia coli O17:K52:H18 (strain UMN026 / ExPEC).